Consider the following 280-residue polypeptide: 2-dehydro-3-deoxyphosphooctonate aldolase (280 aa).

This sequence belongs to the KdsA family.

It localises to the cytoplasm. It carries out the reaction D-arabinose 5-phosphate + phosphoenolpyruvate + H2O = 3-deoxy-alpha-D-manno-2-octulosonate-8-phosphate + phosphate. It functions in the pathway carbohydrate biosynthesis; 3-deoxy-D-manno-octulosonate biosynthesis; 3-deoxy-D-manno-octulosonate from D-ribulose 5-phosphate: step 2/3. Its pathway is bacterial outer membrane biogenesis; lipopolysaccharide biosynthesis. The sequence is that of 2-dehydro-3-deoxyphosphooctonate aldolase from Neisseria gonorrhoeae (strain NCCP11945).